Here is an 847-residue protein sequence, read N- to C-terminus: Aryl hydrocarbon receptor (847 aa).

Residues 1–39 (MNGGGANITYASRKRRKPVQKTVKPIPAEGIKSNPSKRH) are disordered. 2 consecutive short sequence motifs (nuclear localization signal) follow at residues 13–16 (RKRR) and 37–42 (KRHRDR). In terms of domain architecture, bHLH spans 27–80 (PAEGIKSNPSKRHRDRLNTELDRLASLLPFPQDVINKLDKLSVLRLSVSYLRAK). Residues 38 to 66 (RHRDRLNTELDRLASLLPFPQDVINKLDK) are DNA-binding. Required for maintaining the overall integrity of the AHR:ARNT heterodimer and its transcriptional activity stretches follow at residues 50–82 (LASLLPFPQDVINKLDKLSVLRLSVSYLRAKSF), 117–125 (LLQALNGFV), and 264–266 (FAI). The Nuclear export signal signature appears at 64 to 72 (LDKLSVLRL). One can recognise a PAS 1 domain in the interval 120-173 (ALNGFVLVVTVDALVFYASSTIQDYLGFQQSDVIHQSVYELIHTEDRAEFQRQL). Residues 281 to 336 (KNFIFRTKHKLDFTPTGCDAKGQIVLGYTEAELCMRGSGYQFIHAADMLYCAESHI) form the PAS 2 domain. The region spanning 346–384 (LAVFRLLTKDNRWAWVQSNARFIYKNGRPDFIIATQRPL) is the PAC domain. Disordered stretches follow at residues 430–452 (KSGTCGKDSATKPTPSKDSVHPS) and 825–847 (HLPPLHHPSEARPFPDLASGRLL). Over residues 440–452 (TKPTPSKDSVHPS) the composition is skewed to polar residues.

In terms of assembly, homodimer. Heterodimer; efficient DNA binding requires dimerization with another bHLH protein. Binds MYBBP1A. Interacts with coactivators including SRC-1, RIP140 and NOCA7, and with the corepressor SMRT. Interacts with NEDD8 and IVNS1ABP. Interacts with BMAL1. Interacts with HSP90AB1. Interacts with ARNT; the heterodimer ARNT:AHR binds to core DNA sequence 5'-TGCGTG-3' within the dioxin response element (DRE) of target gene promoters and activates their transcription. Interacts with TIPARP; leading to mono-ADP-ribosylation of AHR and subsequent inhibition of AHR. Post-translationally, mono-ADP-ribosylated, leading to inhibit transcription activator activity of AHR.

It localises to the cytoplasm. The protein localises to the nucleus. In terms of biological role, ligand-activated transcription factor that enables cells to adapt to changing conditions by sensing compounds from the environment, diet, microbiome and cellular metabolism, and which plays important roles in development, immunity and cancer. Upon ligand binding, translocates into the nucleus, where it heterodimerizes with ARNT and induces transcription by binding to xenobiotic response elements (XRE). Regulates a variety of biological processes, including angiogenesis, hematopoiesis, drug and lipid metabolism, cell motility and immune modulation. Xenobiotics can act as ligands: upon xenobiotic-binding, activates the expression of multiple phase I and II xenobiotic chemical metabolizing enzyme genes (such as the CYP1A1 gene). Mediates biochemical and toxic effects of halogenated aromatic hydrocarbons. Next to xenobiotics, natural ligands derived from plants, microbiota, and endogenous metabolism are potent AHR agonists. Tryptophan (Trp) derivatives constitute an important class of endogenous AHR ligands. Acts as a negative regulator of anti-tumor immunity: indoles and kynurenic acid generated by Trp catabolism act as ligand and activate AHR, thereby promoting AHR-driven cancer cell motility and suppressing adaptive immunity. Regulates the circadian clock by inhibiting the basal and circadian expression of the core circadian component PER1. Inhibits PER1 by repressing the CLOCK-BMAL1 heterodimer mediated transcriptional activation of PER1. The heterodimer ARNT:AHR binds to core DNA sequence 5'-TGCGTG-3' within the dioxin response element (DRE) of target gene promoters and activates their transcription. The protein is Aryl hydrocarbon receptor (AHR) of Oryctolagus cuniculus (Rabbit).